Here is a 248-residue protein sequence, read N- to C-terminus: Probable transcriptional regulatory protein RPE_4771 (248 aa).

The disordered stretch occupies residues 1 to 21 (MAGHSQFKNIMHRKGRQDAQK).

It belongs to the TACO1 family.

Its subcellular location is the cytoplasm. The sequence is that of Probable transcriptional regulatory protein RPE_4771 from Rhodopseudomonas palustris (strain BisA53).